The primary structure comprises 467 residues: A-type ATP synthase subunit B (467 aa).

Residues Gly-95–Val-114 form a disordered region.

It belongs to the ATPase alpha/beta chains family. Has multiple subunits with at least A(3), B(3), C, D, E, F, H, I and proteolipid K(x).

It localises to the cell membrane. Functionally, component of the A-type ATP synthase that produces ATP from ADP in the presence of a proton gradient across the membrane. The B chain is a regulatory subunit. This is A-type ATP synthase subunit B from Pyrobaculum neutrophilum (strain DSM 2338 / JCM 9278 / NBRC 100436 / V24Sta) (Thermoproteus neutrophilus).